The chain runs to 335 residues: 4-hydroxy-3-methylbut-2-enyl diphosphate reductase 2 (335 aa).

Cys37 lines the [4Fe-4S] cluster pocket. His66 and His99 together coordinate (2E)-4-hydroxy-3-methylbut-2-enyl diphosphate. Residues His66 and His99 each coordinate dimethylallyl diphosphate. Residues His66 and His99 each contribute to the isopentenyl diphosphate site. Cys121 provides a ligand contact to [4Fe-4S] cluster. His149 is a binding site for (2E)-4-hydroxy-3-methylbut-2-enyl diphosphate. His149 provides a ligand contact to dimethylallyl diphosphate. His149 lines the isopentenyl diphosphate pocket. Glu151 functions as the Proton donor in the catalytic mechanism. Thr189 provides a ligand contact to (2E)-4-hydroxy-3-methylbut-2-enyl diphosphate. Cys219 is a [4Fe-4S] cluster binding site. Residues Ser247, Ser248, Asn249, and Ser292 each coordinate (2E)-4-hydroxy-3-methylbut-2-enyl diphosphate. Residues Ser247, Ser248, Asn249, and Ser292 each coordinate dimethylallyl diphosphate. Ser247, Ser248, Asn249, and Ser292 together coordinate isopentenyl diphosphate.

Belongs to the IspH family. [4Fe-4S] cluster serves as cofactor.

It catalyses the reaction isopentenyl diphosphate + 2 oxidized [2Fe-2S]-[ferredoxin] + H2O = (2E)-4-hydroxy-3-methylbut-2-enyl diphosphate + 2 reduced [2Fe-2S]-[ferredoxin] + 2 H(+). The catalysed reaction is dimethylallyl diphosphate + 2 oxidized [2Fe-2S]-[ferredoxin] + H2O = (2E)-4-hydroxy-3-methylbut-2-enyl diphosphate + 2 reduced [2Fe-2S]-[ferredoxin] + 2 H(+). The protein operates within isoprenoid biosynthesis; dimethylallyl diphosphate biosynthesis; dimethylallyl diphosphate from (2E)-4-hydroxy-3-methylbutenyl diphosphate: step 1/1. It functions in the pathway isoprenoid biosynthesis; isopentenyl diphosphate biosynthesis via DXP pathway; isopentenyl diphosphate from 1-deoxy-D-xylulose 5-phosphate: step 6/6. In terms of biological role, catalyzes the conversion of 1-hydroxy-2-methyl-2-(E)-butenyl 4-diphosphate (HMBPP) into a mixture of isopentenyl diphosphate (IPP) and dimethylallyl diphosphate (DMAPP). Acts in the terminal step of the DOXP/MEP pathway for isoprenoid precursor biosynthesis. Has a higher activity compared with LytB2. Is essential for M.tuberculosis growth in vitro. This chain is 4-hydroxy-3-methylbut-2-enyl diphosphate reductase 2, found in Mycobacterium tuberculosis (strain ATCC 25618 / H37Rv).